The chain runs to 398 residues: tRNA(Ile)-lysidine synthase (398 aa).

25 to 30 (SGGVDS) contributes to the ATP binding site.

Belongs to the tRNA(Ile)-lysidine synthase family.

The protein resides in the cytoplasm. It catalyses the reaction cytidine(34) in tRNA(Ile2) + L-lysine + ATP = lysidine(34) in tRNA(Ile2) + AMP + diphosphate + H(+). Its function is as follows. Ligates lysine onto the cytidine present at position 34 of the AUA codon-specific tRNA(Ile) that contains the anticodon CAU, in an ATP-dependent manner. Cytidine is converted to lysidine, thus changing the amino acid specificity of the tRNA from methionine to isoleucine. The sequence is that of tRNA(Ile)-lysidine synthase from Francisella tularensis subsp. holarctica (strain OSU18).